We begin with the raw amino-acid sequence, 952 residues long: Histone deacetylase 7 (952 aa).

Transcription repression regions lie at residues Met-1–Arg-268 and Gly-218–Gly-546. Positions Ser-49–Pro-149 are interaction with MEF2A. A Phosphoserine modification is found at Ser-109. Disordered stretches follow at residues Leu-130–Gly-224 and Pro-261–Ser-283. A Phosphoserine; by MARK2, MARK3 and PKD/PRKD1 modification is found at Ser-155. Over residues Lys-167–Ser-181 the composition is skewed to basic and acidic residues. Ser-181 bears the Phosphoserine; by PKD/PRKD2 mark. Low complexity predominate over residues Ser-197–Pro-212. At Ser-283 the chain carries Phosphoserine. Residue Thr-286 is modified to Phosphothreonine. 3 disordered regions span residues Leu-349–Arg-377, Lys-389–Pro-441, and Leu-460–Glu-510. At Ser-358 the chain carries Phosphoserine; by PKD/PRKD1. Residues Pro-360–Met-374 are compositionally biased toward pro residues. A phosphoserine mark is found at Ser-364, Ser-405, Ser-486, Ser-487, and Ser-507. Residues Ser-482–Ala-503 are compositionally biased toward low complexity. The segment at Pro-512–Asp-865 is histone deacetylase. Positions 533, 535, and 541 each coordinate Zn(2+). Residue Ser-595 is modified to Phosphoserine. Cys-618 contributes to the Zn(2+) binding site. His-670 is an active-site residue. An interaction with SIN3A region spans residues Asn-877–Leu-952. The Nuclear export signal motif lies at Lys-917–Leu-952.

Belongs to the histone deacetylase family. HD type 2 subfamily. In terms of assembly, interacts with HDAC1, HDAC2, HDAC3, HDAC4, HDAC5, NCOR1, NCOR2, SIN3A, SIN3B, RBBP4, RBBP7, MTA1L1, SAP30 and MBD3. Interacts with KAT5 and EDNRA. Interacts with the 14-3-3 protein YWHAE, MEF2A, MEF2B and MEF2C. Interacts with ZMYND15. Interacts with KDM5B. Interacts with PML. Interacts with FOXP3. Interacts with RARA. In terms of processing, may be phosphorylated by CaMK1. Phosphorylated by the PKC kinases PKN1 and PKN2, impairing nuclear import. Phosphorylation at Ser-155 by MARK2, MARK3 and PRKD1 promotes interaction with 14-3-3 proteins and export from the nucleus. Phosphorylation at Ser-155 is a prerequisite for phosphorylation at Ser-181.

It localises to the nucleus. Its subcellular location is the cytoplasm. It carries out the reaction N(6)-acetyl-L-lysyl-[histone] + H2O = L-lysyl-[histone] + acetate. The enzyme catalyses N(6)-acetyl-L-lysyl-[protein] + H2O = L-lysyl-[protein] + acetate. In terms of biological role, responsible for the deacetylation of lysine residues on the N-terminal part of the core histones (H2A, H2B, H3 and H4). Histone deacetylation gives a tag for epigenetic repression and plays an important role in transcriptional regulation, cell cycle progression and developmental events. Histone deacetylases act via the formation of large multiprotein complexes. Involved in muscle maturation by repressing transcription of myocyte enhancer factors such as MEF2A, MEF2B and MEF2C. During muscle differentiation, it shuttles into the cytoplasm, allowing the expression of myocyte enhancer factors. May be involved in Epstein-Barr virus (EBV) latency, possibly by repressing the viral BZLF1 gene. Positively regulates the transcriptional repressor activity of FOXP3. Serves as a corepressor of RARA, causing its deacetylation and inhibition of RARE DNA element binding. In association with RARA, plays a role in the repression of microRNA-10a and thereby in the inflammatory response. Also acetylates non-histone proteins, such as ALKBH5. The polypeptide is Histone deacetylase 7 (HDAC7) (Homo sapiens (Human)).